A 269-amino-acid polypeptide reads, in one-letter code: 3-methyl-2-oxobutanoate hydroxymethyltransferase (269 aa).

The Mg(2+) site is built by D50 and D89. Residues 50–51 (DS), D89, and K118 contribute to the 3-methyl-2-oxobutanoate site. Residue E120 participates in Mg(2+) binding. Catalysis depends on E187, which acts as the Proton acceptor.

It belongs to the PanB family. In terms of assembly, homodecamer; pentamer of dimers. Mg(2+) serves as cofactor.

It localises to the cytoplasm. It carries out the reaction 3-methyl-2-oxobutanoate + (6R)-5,10-methylene-5,6,7,8-tetrahydrofolate + H2O = 2-dehydropantoate + (6S)-5,6,7,8-tetrahydrofolate. It participates in cofactor biosynthesis; (R)-pantothenate biosynthesis; (R)-pantoate from 3-methyl-2-oxobutanoate: step 1/2. In terms of biological role, catalyzes the reversible reaction in which hydroxymethyl group from 5,10-methylenetetrahydrofolate is transferred onto alpha-ketoisovalerate to form ketopantoate. The protein is 3-methyl-2-oxobutanoate hydroxymethyltransferase of Aliarcobacter butzleri (strain RM4018) (Arcobacter butzleri).